A 242-amino-acid polypeptide reads, in one-letter code: uncharacterized protein (242 aa).

This sequence to E.coli MazG and to plasmid pIP1100 erythromycin esterase.

This is an uncharacterized protein from Streptomyces cacaoi.